The following is an 80-amino-acid chain: Cell division protein ZapB (80 aa).

A coiled-coil region spans residues F3 to Q80.

Belongs to the ZapB family. In terms of assembly, homodimer. The ends of the coiled-coil dimer bind to each other, forming polymers. Interacts with FtsZ.

The protein resides in the cytoplasm. Non-essential, abundant cell division factor that is required for proper Z-ring formation. It is recruited early to the divisome by direct interaction with FtsZ, stimulating Z-ring assembly and thereby promoting cell division earlier in the cell cycle. Its recruitment to the Z-ring requires functional FtsA or ZipA. This is Cell division protein ZapB from Proteus mirabilis (strain HI4320).